The chain runs to 470 residues: MAIALIFDCGATNLRTIAINEKGQILASHHLANNTKQGIESSDYHIWDIEEIWQKLTSCATQTLNQLMQQGIDLKDIVGISVTTFGVDGAPFDENDQQLYPIISWKCPRTIPVMENLSNQLDIKSLYQRNGIGQYSFNTLFKLHWLKTHKPDVFQKMAKFVFISSMLTQRLTGQFTTDHTMAGTSMMTNLTSGNWDPSILASLGLSNNHFPPMRYAGEKVGKLRTPLAQKWGLNPVPVISCGHDTQFAVFGSGAGLNQPVLSSGTWEILMARTQHAEPRFEFVSQGLTTEFDAQSNCFNPAVQWVGSGVIEWLGKLLFSDVYGSDHYYTTMIKEGEKAFNAGKRAVNFEGIFSQLGQGNISGLSMFATRGEIYVSALQHMANKLKNGLSVLHQVSQFQAKSLICVGGGSKNVLWNQIRANTLNLPIDVVDISESTVLGAAMFTFAGVGIYENVNAAQQAMQPTRKRIYPN.

The protein belongs to the FGGY kinase family. It depends on a divalent metal cation as a cofactor.

The catalysed reaction is L-fuculose + ATP = L-fuculose 1-phosphate + ADP + H(+). It participates in carbohydrate degradation; L-fucose degradation; L-lactaldehyde and glycerone phosphate from L-fucose: step 2/3. Functionally, catalyzes the phosphorylation of L-fuculose. The chain is L-fuculokinase from Haemophilus influenzae (strain ATCC 51907 / DSM 11121 / KW20 / Rd).